A 370-amino-acid chain; its full sequence is tRNA-specific 2-thiouridylase MnmA (370 aa).

ATP contacts are provided by residues 11–18 and methionine 37; that span reads GMSGGVDS. Residues 97–99 form an interaction with target base in tRNA region; it reads NPD. Cysteine 102 acts as the Nucleophile in catalysis. A disulfide bridge connects residues cysteine 102 and cysteine 199. Residue glycine 126 coordinates ATP. An interaction with tRNA region spans residues 149–151; that stretch reads KDQ. Cysteine 199 serves as the catalytic Cysteine persulfide intermediate. Residues 307–308 are interaction with tRNA; the sequence is RY.

The protein belongs to the MnmA/TRMU family.

The protein resides in the cytoplasm. The catalysed reaction is S-sulfanyl-L-cysteinyl-[protein] + uridine(34) in tRNA + AH2 + ATP = 2-thiouridine(34) in tRNA + L-cysteinyl-[protein] + A + AMP + diphosphate + H(+). Its function is as follows. Catalyzes the 2-thiolation of uridine at the wobble position (U34) of tRNA, leading to the formation of s(2)U34. The protein is tRNA-specific 2-thiouridylase MnmA of Staphylococcus carnosus (strain TM300).